The sequence spans 183 residues: Type II secretion system protein H (183 aa).

A propeptide spans methionine 1–glycine 5 (leader sequence). Residue phenylalanine 6 is modified to N-methylphenylalanine. The chain crosses the membrane as a helical span at residues phenylalanine 6 to isoleucine 26.

As to quaternary structure, type II secretion is composed of four main components: the outer membrane complex, the inner membrane complex, the cytoplasmic secretion ATPase and the periplasm-spanning pseudopilus. Interacts with core component PulG. Interacts with PulM. In terms of processing, cleaved by prepilin peptidase. Post-translationally, methylated by prepilin peptidase at the amino group of the N-terminal phenylalanine once the leader sequence is cleaved by prepilin peptidase.

The protein resides in the cell inner membrane. In terms of biological role, component of the type II secretion system required for the energy-dependent secretion of extracellular factors such as proteases and toxins from the periplasm. Part of the pseudopilus tip complex that is critical for the recognition and binding of secretion substrates. The chain is Type II secretion system protein H (pulH) from Klebsiella michiganensis (strain ATCC 8724 / DSM 4798 / JCM 20051 / NBRC 3318 / NRRL B-199 / KCTC 1686 / BUCSAV 143 / CCM 1901).